The chain runs to 193 residues: Threonylcarbamoyl-AMP synthase (193 aa).

A YrdC-like domain is found at 14–193; that stretch reads SRLQQRARKQ…IDLESGRVLR (180 aa).

Belongs to the SUA5 family. TsaC subfamily.

Its subcellular location is the cytoplasm. It carries out the reaction L-threonine + hydrogencarbonate + ATP = L-threonylcarbamoyladenylate + diphosphate + H2O. Required for the formation of a threonylcarbamoyl group on adenosine at position 37 (t(6)A37) in tRNAs that read codons beginning with adenine. Catalyzes the conversion of L-threonine, HCO(3)(-)/CO(2) and ATP to give threonylcarbamoyl-AMP (TC-AMP) as the acyladenylate intermediate, with the release of diphosphate. In Chromobacterium violaceum (strain ATCC 12472 / DSM 30191 / JCM 1249 / CCUG 213 / NBRC 12614 / NCIMB 9131 / NCTC 9757 / MK), this protein is Threonylcarbamoyl-AMP synthase.